The primary structure comprises 301 residues: MLQYGVLICGVVPVRKPRDIEKALEAPVTCLELRLDYLEADLAEVRPLLEHAVARRVVIFTVRRREEGGQWRGDEEGREALYRKLLELNPHYIDVEAESPIIGEVAKIKGKAQLIASRHDFEKTPPLDVLSQWAKKAAAVGDLVKIVTYAKEPGDGLRVLSLIGAVEKPTVAFAMGPAGAYTRVAAAALGSPIMYVSLGEATAPGQLTADAYYAALLALGITPSGGGLPALREALDWVDGGLMYLLKKRLEVCRDMGRLKKDAGLPIYDDVREAQVLRRAGDFKQIFELVVQMCKAVQLVA.

The tract at residues 1–221 is 3-dehydroquinate dehydratase; the sequence is MLQYGVLICG…YYAALLALGI (221 aa). 3-dehydroquinate is bound by residues 32–34 and arginine 63; that span reads ELR. Catalysis depends on histidine 119, which acts as the Proton donor/acceptor. Lysine 145 (schiff-base intermediate with substrate) is an active-site residue. Positions 183, 202, and 206 each coordinate 3-dehydroquinate. The region spanning 222-301 is the Chorismate mutase domain; that stretch reads TPSGGGLPAL…QMCKAVQLVA (80 aa).

This sequence belongs to the type-I 3-dehydroquinase family. As to quaternary structure, homodimer.

It catalyses the reaction 3-dehydroquinate = 3-dehydroshikimate + H2O. The protein operates within metabolic intermediate biosynthesis; chorismate biosynthesis; chorismate from D-erythrose 4-phosphate and phosphoenolpyruvate: step 3/7. In terms of biological role, involved in the third step of the chorismate pathway, which leads to the biosynthesis of aromatic amino acids. Catalyzes the cis-dehydration of 3-dehydroquinate (DHQ) and introduces the first double bond of the aromatic ring to yield 3-dehydroshikimate. The protein is 3-dehydroquinate dehydratase of Pyrobaculum aerophilum (strain ATCC 51768 / DSM 7523 / JCM 9630 / CIP 104966 / NBRC 100827 / IM2).